Reading from the N-terminus, the 228-residue chain is UPF0758 protein MW1604 (228 aa).

In terms of domain architecture, MPN spans 102–224 (KITQPSDVAD…FTSLVEAGYF (123 aa)). 3 residues coordinate Zn(2+): His173, His175, and Asp186. The JAMM motif signature appears at 173–186 (HNHPSGDVTPSQED).

The protein belongs to the UPF0758 family.

The chain is UPF0758 protein MW1604 from Staphylococcus aureus (strain MW2).